The chain runs to 183 residues: Hypoxanthine/guanine phosphoribosyltransferase (183 aa).

It belongs to the purine/pyrimidine phosphoribosyltransferase family. Archaeal HPRT subfamily. As to quaternary structure, homodimer.

The protein resides in the cytoplasm. It carries out the reaction IMP + diphosphate = hypoxanthine + 5-phospho-alpha-D-ribose 1-diphosphate. It catalyses the reaction GMP + diphosphate = guanine + 5-phospho-alpha-D-ribose 1-diphosphate. Its pathway is purine metabolism; IMP biosynthesis via salvage pathway; IMP from hypoxanthine: step 1/1. Its function is as follows. Catalyzes a salvage reaction resulting in the formation of IMP that is energically less costly than de novo synthesis. The protein is Hypoxanthine/guanine phosphoribosyltransferase of Methanocaldococcus vulcanius (strain ATCC 700851 / DSM 12094 / M7) (Methanococcus vulcanius).